We begin with the raw amino-acid sequence, 318 residues long: Pantothenate kinase (318 aa).

96–103 contributes to the ATP binding site; the sequence is GSVSVGKS.

It belongs to the prokaryotic pantothenate kinase family.

It localises to the cytoplasm. It carries out the reaction (R)-pantothenate + ATP = (R)-4'-phosphopantothenate + ADP + H(+). It participates in cofactor biosynthesis; coenzyme A biosynthesis; CoA from (R)-pantothenate: step 1/5. This is Pantothenate kinase from Bradyrhizobium sp. (strain BTAi1 / ATCC BAA-1182).